Here is a 134-residue protein sequence, read N- to C-terminus: Profilin-2 (134 aa).

A disulfide bridge links Cys13 with Cys118. Positions 84 to 100 match the Involved in PIP2 interaction motif; sequence AVIRGKKGSGGITIKKT. A Phosphothreonine modification is found at Thr114.

The protein belongs to the profilin family. Occurs in many kinds of cells as a complex with monomeric actin in a 1:1 ratio. In terms of processing, phosphorylated by MAP kinases.

It is found in the cytoplasm. Its subcellular location is the cytoskeleton. Binds to actin and affects the structure of the cytoskeleton. At high concentrations, profilin prevents the polymerization of actin, whereas it enhances it at low concentrations. This Olea europaea (Common olive) protein is Profilin-2.